The sequence spans 2890 residues: Bifunctional DNA-directed RNA polymerase subunit beta-beta' (2890 aa).

The segment at 1–1377 (MSKKIPLKNR…DINIFGDDVD (1377 aa)) is DNA-directed RNA polymerase subunit beta. The DNA-directed RNA polymerase subunit beta' stretch occupies residues 1384–2890 (PIVIKEDDRP…LRTLEDGPKF (1507 aa)). C1449, C1451, C1465, and C1468 together coordinate Zn(2+). Mg(2+)-binding residues include D1849, D1851, and D1853. 4 residues coordinate Zn(2+): C2179, C2253, C2260, and C2263.

The protein in the N-terminal section; belongs to the RNA polymerase beta chain family. In the C-terminal section; belongs to the RNA polymerase beta' chain family. As to quaternary structure, the RNAP catalytic core consists of 2 alpha, 1 beta/beta' and 1 omega subunit. When a sigma factor is associated with the core the holoenzyme is formed, which can initiate transcription. The cofactor is Mg(2+). Zn(2+) serves as cofactor.

The catalysed reaction is RNA(n) + a ribonucleoside 5'-triphosphate = RNA(n+1) + diphosphate. Its function is as follows. DNA-dependent RNA polymerase catalyzes the transcription of DNA into RNA using the four ribonucleoside triphosphates as substrates. This is Bifunctional DNA-directed RNA polymerase subunit beta-beta' (rpoBC) from Helicobacter pylori (strain HPAG1).